Reading from the N-terminus, the 721-residue chain is Glycine--tRNA ligase beta subunit (721 aa).

This sequence belongs to the class-II aminoacyl-tRNA synthetase family. As to quaternary structure, tetramer of two alpha and two beta subunits.

Its subcellular location is the cytoplasm. It catalyses the reaction tRNA(Gly) + glycine + ATP = glycyl-tRNA(Gly) + AMP + diphosphate. This chain is Glycine--tRNA ligase beta subunit, found in Sinorhizobium fredii (strain NBRC 101917 / NGR234).